We begin with the raw amino-acid sequence, 131 residues long: Global transcriptional regulator Spx (131 aa).

Positions 10–13 (CTSC) match the CXXC motif. An intrachain disulfide couples C10 to C13.

It belongs to the ArsC family. Spx subfamily. Interacts with the C-terminal domain of the alpha subunit of the RNAP. A single Spx monomer interacts with RNAP to form the transcription activation complex. Interacts with the adapter protein SpxH/YjbH.

Its subcellular location is the cytoplasm. Its activity is regulated as follows. Under non-stress conditions, Spx is degraded by ClpXP and, to a lesser extent, by ClpCP. Efficient dedradation by ClpXP requires the adapter protein SpxH/YjbH. Binding to SpxH/YjbH reduces the overall conformational flexibility of Spx and stabilizes the C-terminal ClpX recognition region of Spx. In addition, activity is modulated by the formation of a disulfide bound within the N-terminal Cys-X-X-Cys (CXXC) motif, which is required for the transcriptional activation of trxA and trxB, or for the activation of msrAB operon expression following paraquat oxidative stress. However, it seems that formation of the disulfide bound is not essential for induction of all Spx-controlled genes, as for example the case of BSH biosynthesis genes. Similarly, induction of the Spx regulon during cell wall stress is not accompanied by oxidation of the disulfide switch, but requires Spx stabilization by the anti-adapter protein SpxO/YirB. Functionally, global transcriptional regulator that plays a key role in stress response and exerts either positive or negative regulation of genes. Acts by interacting with the C-terminal domain of the alpha subunit of the RNA polymerase (RNAP). This interaction can enhance binding of RNAP to the promoter region of target genes and stimulate their transcription, or block interaction of RNAP with activator proteins and repress transcription. Exhibits no DNA-binding activity. In terms of biological role, induces the expression of a large number of genes in response to a variety of stress conditions, such as disulfide, heat and cell wall stress, while concurrently repressing transcription of genes involved in various developmental and growth-related pathways during periods of extreme stress. Functions in the oxidative stress response via induction of the transcription of thioredoxin (trxA) and thioredoxin reductase (trxB) during thiol-specific oxidative (disulfide) stress. Mediates response to oxidative stress caused by paraquat (PQ) via induction of the methionine sulfoxide reductase genes, msrA and msrB. Also acts as a transcriptional activator of the bacillithiol (BSH) biosynthesis genes in response to oxidizing conditions and thio-reactive compounds. Involved in heat stress response and thermotolerance development, which results in diminished cellular protein aggregates. Plays an important adaptive role in the cell wall stress response. Participates in sulfate-dependent control of organosulfur metabolism. Negatively controls, via CymR, the expression of the organosulfur utilization operons ytmI, yxeI and ssu, and directly activates yrrT operon expression during growth in medium containing methionine as sole sulfur source. Negatively affects competence and sporulation. Inhibits biofilm formation in response to disulfide stress by repressing biofilm matrix genes. This is Global transcriptional regulator Spx from Bacillus subtilis (strain 168).